A 424-amino-acid chain; its full sequence is Chloroquine resistance transporter (424 aa).

At Met1 to Lys49 the chain is on the cytoplasmic side. Residues Leu50–Asn58 lie within the membrane without spanning it. Residues Ile59–Leu83 traverse the membrane as a helical segment. The Vacuolar portion of the chain corresponds to Asn84–Tyr89. Residues Ser90–Leu111 traverse the membrane as a helical segment. The Cytoplasmic portion of the chain corresponds to Phe112–Phe126. The helical transmembrane segment at Asn127–Gly147 threads the bilayer. Over Leu148–Thr152 the chain is Vacuolar. A helical membrane pass occupies residues Gly153–Leu173. The Cytoplasmic portion of the chain corresponds to Ile174–His180. A helical transmembrane segment spans residues Leu181 to Ser202. The Vacuolar segment spans residues Phe203–Ser210. Residues Ile211–Lys236 form a helical membrane-spanning segment. Residues Lys237–Asp241 are Cytoplasmic-facing. A helical transmembrane segment spans residues Ile242–Val263. Over Tyr264–Ile279 the chain is Vacuolar. Residues Trp280–Leu292 lie within the membrane without spanning it. Cystine bridges form between Cys289–Cys312 and Cys301–Cys309. Residues Gly293–Gly314 are Vacuolar-facing. The chain crosses the membrane as a helical span at residues Ala315–Lys339. At Phe340–Met343 the chain is on the cytoplasmic side. The chain crosses the membrane as a helical span at residues Thr344 to Tyr361. Topologically, residues Phe362 to Arg374 are vacuolar. A helical membrane pass occupies residues Leu375 to Ile397. The Cytoplasmic segment spans residues Leu398–Gln424.

This sequence belongs to the CRT-like transporter family. Monomer.

It localises to the membrane. It is found in the vacuole membrane. The catalysed reaction is L-arginine(in) = L-arginine(out). It catalyses the reaction L-lysine(in) = L-lysine(out). The enzyme catalyses L-histidine(out) = L-histidine(in). It carries out the reaction Fe(3+)(in) = Fe(3+)(out). The catalysed reaction is Fe(2+)(in) = Fe(2+)(out). Nutrient transporter. Substrate transport is pH-dependent. Can transport arginine, lysine, histidine and peptides. Involved in maintaining the osmotic homeostasis of the digestive vacuole. Required for the normal asexual intraerythrocytic proliferation of parasites. Can transport Fe(2+) and Fe(3+). The chain is Chloroquine resistance transporter from Plasmodium falciparum (isolate 7G8).